Here is a 180-residue protein sequence, read N- to C-terminus: Small ribosomal subunit protein uS4 (180 aa).

The 72-residue stretch at 103 to 174 (RRLQTLVFKK…HPERMVIEEV (72 aa)) folds into the S4 RNA-binding domain.

It belongs to the universal ribosomal protein uS4 family. In terms of assembly, part of the 30S ribosomal subunit. Contacts protein S5. The interaction surface between S4 and S5 is involved in control of translational fidelity.

Functionally, one of the primary rRNA binding proteins, it binds directly to 16S rRNA where it nucleates assembly of the body of the 30S subunit. In terms of biological role, with S5 and S12 plays an important role in translational accuracy. This chain is Small ribosomal subunit protein uS4, found in Thermococcus sibiricus (strain DSM 12597 / MM 739).